A 79-amino-acid chain; its full sequence is CDC42 small effector protein 1 (79 aa).

Residues Cys10 and Cys11 are each lipidated (S-palmitoyl cysteine). The CRIB domain occupies 30–43; that stretch reads IGEPMNFVHLTHIG. The tract at residues 41–79 is disordered; sequence HIGSGDMGASDGLPRAGGVQEQMRSKCGRDRQWSNSGVL. The segment covering 63–72 has biased composition (basic and acidic residues); it reads MRSKCGRDRQ.

Belongs to the CDC42SE/SPEC family.

Its subcellular location is the cytoplasm. It is found in the cytoskeleton. It localises to the cell membrane. Probably involved in the organization of the actin cytoskeleton by acting downstream of CDC42, inducing actin filament assembly. This Xenopus tropicalis (Western clawed frog) protein is CDC42 small effector protein 1 (cdc42se1).